A 1365-amino-acid polypeptide reads, in one-letter code: Polyprotein ABA-1 (1365 aa).

The protein belongs to the NPA family. In terms of processing, nematode polyprotein allergens (NPAs) are synthesized as large polypeptides that are subsequently proteolytically cleaved to active polypeptide units. In terms of tissue distribution, pseudocoelomic fluid.

Functionally, has high binding affinity for fatty acids and retinoids. In Ascaris suum (Pig roundworm), this protein is Polyprotein ABA-1 (ABA-1).